A 385-amino-acid polypeptide reads, in one-letter code: Succinate--CoA ligase [ADP-forming] subunit beta (385 aa).

The 236-residue stretch at 9–244 (KEVLRKYGVS…LDEEDPKEIE (236 aa)) folds into the ATP-grasp domain. ATP is bound by residues lysine 46, 53–55 (GRG), glutamate 99, cysteine 102, and glutamate 107. Mg(2+) is bound by residues asparagine 199 and aspartate 213. Serine 220 is subject to Phosphoserine. Substrate contacts are provided by residues asparagine 264 and 321–323 (GIM).

The protein belongs to the succinate/malate CoA ligase beta subunit family. As to quaternary structure, heterotetramer of two alpha and two beta subunits. Interacts with BrxC. Mg(2+) is required as a cofactor.

It catalyses the reaction succinate + ATP + CoA = succinyl-CoA + ADP + phosphate. The enzyme catalyses GTP + succinate + CoA = succinyl-CoA + GDP + phosphate. It participates in carbohydrate metabolism; tricarboxylic acid cycle; succinate from succinyl-CoA (ligase route): step 1/1. Functionally, succinyl-CoA synthetase functions in the citric acid cycle (TCA), coupling the hydrolysis of succinyl-CoA to the synthesis of either ATP or GTP and thus represents the only step of substrate-level phosphorylation in the TCA. The beta subunit provides nucleotide specificity of the enzyme and binds the substrate succinate, while the binding sites for coenzyme A and phosphate are found in the alpha subunit. This is Succinate--CoA ligase [ADP-forming] subunit beta from Bacillus subtilis (strain 168).